A 248-amino-acid chain; its full sequence is Probable transcriptional regulatory protein Mchl_0946 (248 aa).

Belongs to the TACO1 family.

The protein resides in the cytoplasm. The polypeptide is Probable transcriptional regulatory protein Mchl_0946 (Methylorubrum extorquens (strain CM4 / NCIMB 13688) (Methylobacterium extorquens)).